Reading from the N-terminus, the 232-residue chain is Large ribosomal subunit protein uL1 (232 aa).

This sequence belongs to the universal ribosomal protein uL1 family. Part of the 50S ribosomal subunit.

Functionally, binds directly to 23S rRNA. The L1 stalk is quite mobile in the ribosome, and is involved in E site tRNA release. In terms of biological role, protein L1 is also a translational repressor protein, it controls the translation of the L11 operon by binding to its mRNA. This Bacteroides thetaiotaomicron (strain ATCC 29148 / DSM 2079 / JCM 5827 / CCUG 10774 / NCTC 10582 / VPI-5482 / E50) protein is Large ribosomal subunit protein uL1.